A 511-amino-acid chain; its full sequence is 2-methylbutanal oxime monooxygenase (511 aa).

2 helical membrane passes run 10 to 30 (PPQW…LLLF) and 304 to 324 (ILMN…TWAF). A heme-binding site is contributed by cysteine 451.

This sequence belongs to the cytochrome P450 family. Heme serves as cofactor. As to expression, expressed in storage roots, primary roots, petioles and vascular tissues. Expressed in the outer cortex cells, the endodermis and around the xylem, phloem cells and laticifers.

It is found in the microsome membrane. It catalyses the reaction (1E,2S)-2-methylbutanal oxime + reduced [NADPH--hemoprotein reductase] + O2 = 2-hydroxy-2-methylbutanenitrile + oxidized [NADPH--hemoprotein reductase] + 2 H2O + H(+). It carries out the reaction (E)-2-methylpropanal oxime + reduced [NADPH--hemoprotein reductase] + O2 = 2-hydroxy-2-methylpropanenitrile + oxidized [NADPH--hemoprotein reductase] + 2 H2O + H(+). Its function is as follows. Catalyzes the conversion of (E)-2-methylpropanal oxime (valox) to 2-hydroxy-2-methylpropanenitrile (acetone cyanohydrin) and of (E)-2-methylbutanal oxime (ilox) to 2-hydroxy-2-methylbutyronitrile. The reaction takes place in three steps. First, the oxime is isomerized to the (Z)- isomer, next the (Z)-isomer is dehydrated to the corresponding nitrile, followed by a C-hydroxylation of the nitrile. Can use both aliphatic and aromatic oximes as substrates. The sequence is that of 2-methylbutanal oxime monooxygenase (CYP71E7) from Manihot esculenta (Cassava).